The chain runs to 398 residues: Galactose-3-O-sulfotransferase 2 (398 aa).

Over 1–11 the chain is Cytoplasmic; the sequence is MLSALGGLQRC. A helical; Signal-anchor for type II membrane protein transmembrane segment spans residues 12–29; it reads FWAILLLALTVSLLAGFL. Residues 30–398 lie on the Lumenal side of the membrane; that stretch reads HKDVRLLMPL…PPKNIPFLGA (369 aa). N-linked (GlcNAc...) asparagine glycans are attached at residues Asn-77, Asn-133, Asn-180, Asn-288, Asn-330, and Asn-360.

It belongs to the galactose-3-O-sulfotransferase family.

The protein localises to the golgi apparatus. Its subcellular location is the golgi stack membrane. The protein operates within protein modification; carbohydrate sulfation. Its activity is regulated as follows. Strongly inhibited by Cu(2+) and Zn(2+). Functionally, transfers a sulfate group to the hydroxyl group at C3 of non-reducing beta-galactosyl residues. Acts both on type 1 (Gal-beta-1,3-GlcNAc) and type 2 (Gal-beta-1,4-GlcNAc) chains with similar efficiency. The protein is Galactose-3-O-sulfotransferase 2 (GAL3ST2) of Sus scrofa (Pig).